We begin with the raw amino-acid sequence, 253 residues long: Small ribosomal subunit protein uS2 (253 aa).

This sequence belongs to the universal ribosomal protein uS2 family.

This chain is Small ribosomal subunit protein uS2, found in Parvibaculum lavamentivorans (strain DS-1 / DSM 13023 / NCIMB 13966).